The primary structure comprises 146 residues: Cytidine deaminase (146 aa).

The region spanning 13 to 140 (ECVQQLLVCS…ELLPSSFGPE (128 aa)) is the CMP/dCMP-type deaminase domain. 54–60 (NIENACY) provides a ligand contact to substrate. Cysteine 65 is a binding site for Zn(2+). Glutamate 67 (proton donor) is an active-site residue. Residues cysteine 99 and cysteine 102 each coordinate Zn(2+).

Belongs to the cytidine and deoxycytidylate deaminase family. As to quaternary structure, homotetramer. It depends on Zn(2+) as a cofactor. In terms of tissue distribution, highly expressed in granulocytes while expression is very low in fibroblasts, chondrocytes, monocytes, and T- as well as B-cell lines.

It carries out the reaction cytidine + H2O + H(+) = uridine + NH4(+). The catalysed reaction is 2'-deoxycytidine + H2O + H(+) = 2'-deoxyuridine + NH4(+). In terms of biological role, this enzyme scavenges exogenous and endogenous cytidine and 2'-deoxycytidine for UMP synthesis. The protein is Cytidine deaminase of Homo sapiens (Human).